A 486-amino-acid chain; its full sequence is Membrane-bound lytic murein transglycosylase F (486 aa).

The first 21 residues, 1–21 (MTRIKLSYFTIGLVALLLALA), serve as a signal peptide directing secretion. The interval 22-268 (LWPNIPWRNG…RLEEKYLGHV (247 aa)) is non-LT domain. Residues 269–486 (GSFDYVDTKT…VVGPGWSIGD (218 aa)) form an LT domain region. Glu313 is an active-site residue.

The protein in the N-terminal section; belongs to the bacterial solute-binding protein 3 family. This sequence in the C-terminal section; belongs to the transglycosylase Slt family.

The protein resides in the cell outer membrane. The catalysed reaction is Exolytic cleavage of the (1-&gt;4)-beta-glycosidic linkage between N-acetylmuramic acid (MurNAc) and N-acetylglucosamine (GlcNAc) residues in peptidoglycan, from either the reducing or the non-reducing ends of the peptidoglycan chains, with concomitant formation of a 1,6-anhydrobond in the MurNAc residue.. Functionally, murein-degrading enzyme that degrades murein glycan strands and insoluble, high-molecular weight murein sacculi, with the concomitant formation of a 1,6-anhydromuramoyl product. Lytic transglycosylases (LTs) play an integral role in the metabolism of the peptidoglycan (PG) sacculus. Their lytic action creates space within the PG sacculus to allow for its expansion as well as for the insertion of various structures such as secretion systems and flagella. The chain is Membrane-bound lytic murein transglycosylase F from Yersinia pseudotuberculosis serotype I (strain IP32953).